The following is a 211-amino-acid chain: Ribosomal RNA small subunit methyltransferase G (211 aa).

Residues Gly-75, Leu-80, 130-131, and Arg-145 contribute to the S-adenosyl-L-methionine site; that span reads VE.

This sequence belongs to the methyltransferase superfamily. RNA methyltransferase RsmG family.

The protein localises to the cytoplasm. It carries out the reaction guanosine(527) in 16S rRNA + S-adenosyl-L-methionine = N(7)-methylguanosine(527) in 16S rRNA + S-adenosyl-L-homocysteine. Its function is as follows. Specifically methylates the N7 position of guanine in position 527 of 16S rRNA. The sequence is that of Ribosomal RNA small subunit methyltransferase G from Aromatoleum aromaticum (strain DSM 19018 / LMG 30748 / EbN1) (Azoarcus sp. (strain EbN1)).